A 344-amino-acid chain; its full sequence is Holliday junction branch migration complex subunit RuvB (344 aa).

A large ATPase domain (RuvB-L) region spans residues 1 to 182 (MRIEALNTAP…FGINSRLDYY (182 aa)). ATP-binding positions include isoleucine 21, arginine 22, glycine 63, lysine 66, threonine 67, threonine 68, 129–131 (EDY), arginine 172, tyrosine 182, and arginine 219. A Mg(2+)-binding site is contributed by threonine 67. The tract at residues 183 to 253 (NPELLQSIII…VARRTLESLE (71 aa)) is small ATPAse domain (RuvB-S). The interval 256-344 (EGGLDDMDKK…GSLFDTAEDG (89 aa)) is head domain (RuvB-H). The DNA site is built by arginine 311 and arginine 316.

It belongs to the RuvB family. In terms of assembly, homohexamer. Forms an RuvA(8)-RuvB(12)-Holliday junction (HJ) complex. HJ DNA is sandwiched between 2 RuvA tetramers; dsDNA enters through RuvA and exits via RuvB. An RuvB hexamer assembles on each DNA strand where it exits the tetramer. Each RuvB hexamer is contacted by two RuvA subunits (via domain III) on 2 adjacent RuvB subunits; this complex drives branch migration. In the full resolvosome a probable DNA-RuvA(4)-RuvB(12)-RuvC(2) complex forms which resolves the HJ.

Its subcellular location is the cytoplasm. It catalyses the reaction ATP + H2O = ADP + phosphate + H(+). Its function is as follows. The RuvA-RuvB-RuvC complex processes Holliday junction (HJ) DNA during genetic recombination and DNA repair, while the RuvA-RuvB complex plays an important role in the rescue of blocked DNA replication forks via replication fork reversal (RFR). RuvA specifically binds to HJ cruciform DNA, conferring on it an open structure. The RuvB hexamer acts as an ATP-dependent pump, pulling dsDNA into and through the RuvAB complex. RuvB forms 2 homohexamers on either side of HJ DNA bound by 1 or 2 RuvA tetramers; 4 subunits per hexamer contact DNA at a time. Coordinated motions by a converter formed by DNA-disengaged RuvB subunits stimulates ATP hydrolysis and nucleotide exchange. Immobilization of the converter enables RuvB to convert the ATP-contained energy into a lever motion, pulling 2 nucleotides of DNA out of the RuvA tetramer per ATP hydrolyzed, thus driving DNA branch migration. The RuvB motors rotate together with the DNA substrate, which together with the progressing nucleotide cycle form the mechanistic basis for DNA recombination by continuous HJ branch migration. Branch migration allows RuvC to scan DNA until it finds its consensus sequence, where it cleaves and resolves cruciform DNA. The polypeptide is Holliday junction branch migration complex subunit RuvB (Chlorobaculum tepidum (strain ATCC 49652 / DSM 12025 / NBRC 103806 / TLS) (Chlorobium tepidum)).